Consider the following 30-residue polypeptide: GFPCGESCVFIPCISAAIGCSCKNKVCYRN.

The segment at residues 1–30 is a cross-link (cyclopeptide (Gly-Asn)); the sequence is GFPCGESCVFIPCISAAIGCSCKNKVCYRN. 3 disulfide bridges follow: C4-C20, C8-C22, and C13-C27.

In terms of processing, this is a cyclic peptide.

In terms of biological role, probably participates in a plant defense mechanism. Has anti-HIV activity. The protein is Cycloviolin-D of Leonia cymosa (Sacha uba).